The following is a 116-amino-acid chain: Nucleoid-associated protein A9601_00191 (116 aa).

The protein belongs to the YbaB/EbfC family. In terms of assembly, homodimer.

Its subcellular location is the cytoplasm. It localises to the nucleoid. Its function is as follows. Binds to DNA and alters its conformation. May be involved in regulation of gene expression, nucleoid organization and DNA protection. The sequence is that of Nucleoid-associated protein A9601_00191 from Prochlorococcus marinus (strain AS9601).